We begin with the raw amino-acid sequence, 403 residues long: MSTRTPSSSSSRLMLTIGLCFLVALMEGLDLQAAGIAAGGIAQAFALDKMQMGWIFSAGILGLLPGALVGGMLADRYGRKRILIGSVALFGLFSLATAIAWDFPSLVFARLMTGVGLGAALPNLIALTSEAAGPRFRGTAVSLMYCGVPIGAALAATLGFAGANLAWQTVFWVGGVVPLILVPLLMRWLPESAVFAGEKQSAPPLRALFAPETATATLLLWLCYFFTLLVVYMLINWLPLLLVEQGFQPSQAAGVMFALQMGAASGTLMLGALMDKLRPVTMSLLIYSGMLASLLALGTVSSFNGMLLAGFVAGLFATGGQSVLYALAPLFYSSQIRATGVGTAVAVGRLGAMSGPLLAGKMLALGTGTVGVMAASAPGILVAGLAVFILMSRRSRIQPCADA.

Residues 1–16 (MSTRTPSSSSSRLMLT) are Cytoplasmic-facing. The chain crosses the membrane as a helical span at residues 17-37 (IGLCFLVALMEGLDLQAAGIA). The Periplasmic segment spans residues 38-53 (AGGIAQAFALDKMQMG). Residues 54–74 (WIFSAGILGLLPGALVGGMLA) traverse the membrane as a helical segment. Residues 75–81 (DRYGRKR) lie on the Cytoplasmic side of the membrane. A helical membrane pass occupies residues 82–102 (ILIGSVALFGLFSLATAIAWD). Over 103–105 (FPS) the chain is Periplasmic. A helical transmembrane segment spans residues 106–126 (LVFARLMTGVGLGAALPNLIA). The Cytoplasmic portion of the chain corresponds to 127 to 142 (LTSEAAGPRFRGTAVS). Residues 143-163 (LMYCGVPIGAALAATLGFAGA) traverse the membrane as a helical segment. Position 164 (Asn-164) is a topological domain, periplasmic. Residues 165-185 (LAWQTVFWVGGVVPLILVPLL) traverse the membrane as a helical segment. Over 186-217 (MRWLPESAVFAGEKQSAPPLRALFAPETATAT) the chain is Cytoplasmic. A helical membrane pass occupies residues 218-238 (LLLWLCYFFTLLVVYMLINWL). Topologically, residues 239-253 (PLLLVEQGFQPSQAA) are periplasmic. Residues 254-274 (GVMFALQMGAASGTLMLGALM) form a helical membrane-spanning segment. Residues 275 to 279 (DKLRP) lie on the Cytoplasmic side of the membrane. The helical transmembrane segment at 280–300 (VTMSLLIYSGMLASLLALGTV) threads the bilayer. The Periplasmic portion of the chain corresponds to 301–306 (SSFNGM). Residues 307 to 327 (LLAGFVAGLFATGGQSVLYAL) traverse the membrane as a helical segment. Over 328 to 339 (APLFYSSQIRAT) the chain is Cytoplasmic. A helical transmembrane segment spans residues 340–360 (GVGTAVAVGRLGAMSGPLLAG). The Periplasmic segment spans residues 361-369 (KMLALGTGT). Residues 370–390 (VGVMAASAPGILVAGLAVFIL) traverse the membrane as a helical segment. Topologically, residues 391–403 (MSRRSRIQPCADA) are cytoplasmic.

This sequence belongs to the major facilitator superfamily. Aromatic acid:H(+) symporter (AAHS) (TC 2.A.1.15) family.

The protein localises to the cell inner membrane. The enzyme catalyses 3-(3-hydroxyphenyl)propanoate(in) + H(+)(in) = 3-(3-hydroxyphenyl)propanoate(out) + H(+)(out). Its activity is regulated as follows. Inhibited by carbonyl cyanide m-chlorophenylhydrazone (CCCP), which dissipates the proton motive force. Uptake of 3-(3-hydroxyphenyl)propionate (3HPP) across the cytoplasmic membrane. Transport is driven by the proton motive force. Does not transport benzoate, 3-hydroxybenzoate or gentisate. In Escherichia coli (strain K12), this protein is 3-(3-hydroxy-phenyl)propionate transporter.